A 285-amino-acid polypeptide reads, in one-letter code: tRNA (cytidine(32)/guanosine(34)-2'-O)-methyltransferase (285 aa).

Gly53, Trp55, Asp83, Asp99, and Asp124 together coordinate S-adenosyl-L-methionine. Lys164 serves as the catalytic Proton acceptor.

This sequence belongs to the class I-like SAM-binding methyltransferase superfamily. RNA methyltransferase RlmE family. TRM7 subfamily.

The protein resides in the cytoplasm. The catalysed reaction is cytidine(32)/guanosine(34) in tRNA + 2 S-adenosyl-L-methionine = 2'-O-methylcytidine(32)/2'-O-methylguanosine(34) in tRNA + 2 S-adenosyl-L-homocysteine + 2 H(+). Functionally, methylates the 2'-O-ribose of nucleotides at positions 32 and 34 of the tRNA anticodon loop of substrate tRNAs. Requires trm732 for methylation of the cytidine at position 32 of the anticodon loop of substrate tRNAs. Requires trm734 for methylation of the nucleotide at position 34 of the anticodon loop of substrate tRNAs. Methylates tRNA(Phe). This chain is tRNA (cytidine(32)/guanosine(34)-2'-O)-methyltransferase, found in Schizosaccharomyces pombe (strain 972 / ATCC 24843) (Fission yeast).